The sequence spans 331 residues: tRNA-cytidine(32) 2-sulfurtransferase (331 aa).

Residues Met-1 to Gln-33 form a disordered region. The span at Asp-8–Ala-23 shows a compositional bias: low complexity. Positions Ser-71–Ser-76 match the PP-loop motif motif. [4Fe-4S] cluster is bound by residues Cys-146, Cys-149, and Cys-237.

It belongs to the TtcA family. In terms of assembly, homodimer. The cofactor is Mg(2+). Requires [4Fe-4S] cluster as cofactor.

The protein localises to the cytoplasm. It carries out the reaction cytidine(32) in tRNA + S-sulfanyl-L-cysteinyl-[cysteine desulfurase] + AH2 + ATP = 2-thiocytidine(32) in tRNA + L-cysteinyl-[cysteine desulfurase] + A + AMP + diphosphate + H(+). It functions in the pathway tRNA modification. Functionally, catalyzes the ATP-dependent 2-thiolation of cytidine in position 32 of tRNA, to form 2-thiocytidine (s(2)C32). The sulfur atoms are provided by the cysteine/cysteine desulfurase (IscS) system. This Burkholderia cenocepacia (strain HI2424) protein is tRNA-cytidine(32) 2-sulfurtransferase.